A 92-amino-acid chain; its full sequence is UPF0235 protein PF1765 (92 aa).

Belongs to the UPF0235 family.

The sequence is that of UPF0235 protein PF1765 from Pyrococcus furiosus (strain ATCC 43587 / DSM 3638 / JCM 8422 / Vc1).